The chain runs to 413 residues: Multidrug resistance protein MdtA (413 aa).

The signal sequence occupies residues 1-25; the sequence is MKNKRRTYFFQFAVLAVVIATAYFA. A disordered region spans residues 394 to 413; that stretch reads ANTYDQMDKSKPSNSKVENT.

Belongs to the membrane fusion protein (MFP) (TC 8.A.1) family. As to quaternary structure, part of a tripartite efflux system composed of MdtA, MdtB and MdtC.

It localises to the cell inner membrane. The sequence is that of Multidrug resistance protein MdtA from Xenorhabdus bovienii (strain SS-2004) (Xenorhabdus nematophila subsp. bovienii).